Here is a 394-residue protein sequence, read N- to C-terminus: Phosphopentomutase (394 aa).

Mn(2+) contacts are provided by aspartate 10, aspartate 282, histidine 287, aspartate 323, histidine 324, and histidine 335.

It belongs to the phosphopentomutase family. It depends on Mn(2+) as a cofactor.

It localises to the cytoplasm. The catalysed reaction is 2-deoxy-alpha-D-ribose 1-phosphate = 2-deoxy-D-ribose 5-phosphate. It catalyses the reaction alpha-D-ribose 1-phosphate = D-ribose 5-phosphate. The protein operates within carbohydrate degradation; 2-deoxy-D-ribose 1-phosphate degradation; D-glyceraldehyde 3-phosphate and acetaldehyde from 2-deoxy-alpha-D-ribose 1-phosphate: step 1/2. Its function is as follows. Isomerase that catalyzes the conversion of deoxy-ribose 1-phosphate (dRib-1-P) and ribose 1-phosphate (Rib-1-P) to deoxy-ribose 5-phosphate (dRib-5-P) and ribose 5-phosphate (Rib-5-P), respectively. The chain is Phosphopentomutase from Dictyoglomus turgidum (strain DSM 6724 / Z-1310).